Consider the following 499-residue polypeptide: Citrinin biosynthesis cluster MFS transporter mrr1 (499 aa).

Positions 1 to 29 are disordered; it reads MKEEIDAPVSTDASGTDLENARDQPSGEK. The next 8 membrane-spanning stretches (helical) occupy residues 58-78, 95-115, 124-144, 155-175, 187-207, 215-235, 291-311, and 327-347; these read SLITCIFSTLTIWVTFSSSVF, VMTLGTSLTVLGFTVGPLVWG, LKPLYIGYAIFIIFQVPVAVA, FFLGFFGTSALAIIPGALADF, LFSAATFVGPIFGPIIGGFIV, WTAWITMIPASFFGIIAFLTL, ILVCMTIYISLIYGILYLFFV, and GIAALPFLGILVGVLMGCLLV. Asn-361 is a glycosylation site (N-linked (GlcNAc...) asparagine). 4 helical membrane passes run 370-390, 395-415, 443-463, and 467-487; these read LPPMIVAAILLPIGLFWFGWT, ISWAPQAIAGAPIGMGILMIW, AVGAAFPLFATAMYHKLGVDW, and LLGFLSIAMIPIPVIFYFYGA.

Belongs to the major facilitator superfamily. CAR1 family.

It is found in the membrane. MFS transporter; part of the gene cluster that mediates the biosynthesis the mycotoxin citrinin, a hepato-nephrotoxic compound to humans due to inhibition of respiration complex III. The protein is Citrinin biosynthesis cluster MFS transporter mrr1 of Monascus ruber (Mold).